The sequence spans 1083 residues: Protein HOS4 (1083 aa).

Disordered regions lie at residues 1 to 233 (MNET…RKLV) and 267 to 328 (SSLF…YRDS). Residues serine 14 and serine 16 each carry the phosphoserine modification. A compositionally biased stretch (basic and acidic residues) spans 24 to 62 (TRREELEKISKQETSEEEDTAGKHEQRETLSEEVSDKFP). Position 37 is a phosphothreonine (threonine 37). At serine 67 the chain carries Phosphoserine. The span at 67–85 (SFRSQTTSVHQATQNNLNA) shows a compositional bias: polar residues. The span at 86–118 (KESEDLAHKNDASSHEGEVNGDSRPDDVPETNE) shows a compositional bias: basic and acidic residues. Over residues 135–149 (PNVRNVDIQNHQPFS) the composition is skewed to polar residues. Positions 151–166 (DQLRAMLKEPKRKTVD) are enriched in basic and acidic residues. Acidic residues predominate over residues 167–185 (DFIEEEGLGAVEEEDLSDE). Positions 186–207 (VLEKNTTEPENVEKDIEYSDSD) are enriched in basic and acidic residues. The span at 277–293 (VKETNNNLSNMNSSPAQ) shows a compositional bias: polar residues. Residue serine 290 is modified to Phosphoserine. A compositionally biased stretch (low complexity) spans 300–310 (VSRSNDSNKSS). Positions 314–323 (VSKRPKQKKG) are enriched in basic residues. ANK repeat units follow at residues 329-359 (GGRTRLQIACDKGKYDVVKKMIEEGGYDIND), 363-392 (AGNTALHEAALQGHIEIVELLIENGADVNI), and 398-427 (FGDTPLIDASANGHLDVVKYLLKNGADPTI). The interval 472–516 (AGIHNDKSKNGNNAHTIDQPPFDNTTKAKNEKAADSPSMASNIDE) is disordered. Over residues 481 to 496 (NGNNAHTIDQPPFDNT) the composition is skewed to polar residues. Serine 507 bears the Phosphoserine mark. 2 ANK repeats span residues 532 to 561 (AGKEKLFKASKEGHLPYVGTYVENGGKIDL) and 593 to 622 (NKTSALMVAVGRGHLGTVKLLLEAGADPTK). Disordered stretches follow at residues 661–742 (HSED…DDNE) and 762–790 (DEEKLKSISPLSMEPHSPKKAKSVEISKI). Over residues 665-675 (NNDDDDDDDNN) the composition is skewed to acidic residues. Serine 698 bears the Phosphoserine mark. Threonine 700 carries the phosphothreonine modification. Basic and acidic residues predominate over residues 721-740 (NNDRDVKESTTSDSRKRLDD). Position 778 is a phosphoserine (serine 778).

As to quaternary structure, identified in the Set3C complex with HOS2, HST1, SNT1, SIF2, CPR1 and SET3.

Unknown. Component of the Set3C complex, which is required to repress early/middle sporulation genes during meiosis. This chain is Protein HOS4 (HOS4), found in Saccharomyces cerevisiae (strain ATCC 204508 / S288c) (Baker's yeast).